The primary structure comprises 140 residues: Gonadotropin subunit beta-2 (140 aa).

The signal sequence occupies residues 1–23; the sequence is MSVPASSFLLLCFLMNSFSPAQS. 6 disulfides stabilise this stretch: Cys29–Cys77, Cys43–Cys92, Cys46–Cys130, Cys54–Cys108, Cys58–Cys110, and Cys113–Cys120. Residue Asn33 is glycosylated (N-linked (GlcNAc...) asparagine).

Belongs to the glycoprotein hormones subunit beta family. In terms of assembly, heterodimer of an alpha and a beta chain.

It is found in the secreted. Its function is as follows. Involved in gametogenesis and steroidogenesis. The chain is Gonadotropin subunit beta-2 (cgbb) from Ictalurus punctatus (Channel catfish).